The sequence spans 187 residues: Elongation factor P (187 aa).

It belongs to the elongation factor P family.

The protein resides in the cytoplasm. Its pathway is protein biosynthesis; polypeptide chain elongation. Functionally, involved in peptide bond synthesis. Stimulates efficient translation and peptide-bond synthesis on native or reconstituted 70S ribosomes in vitro. Probably functions indirectly by altering the affinity of the ribosome for aminoacyl-tRNA, thus increasing their reactivity as acceptors for peptidyl transferase. This chain is Elongation factor P, found in Arthrobacter sp. (strain FB24).